The following is a 155-amino-acid chain: Transcriptional repressor NrdR (155 aa).

Residues cysteine 3–cysteine 34 fold into a zinc finger. Residues leucine 49–aspartate 139 enclose the ATP-cone domain.

It belongs to the NrdR family. Requires Zn(2+) as cofactor.

In terms of biological role, negatively regulates transcription of bacterial ribonucleotide reductase nrd genes and operons by binding to NrdR-boxes. The protein is Transcriptional repressor NrdR of Roseobacter denitrificans (strain ATCC 33942 / OCh 114) (Erythrobacter sp. (strain OCh 114)).